The primary structure comprises 257 residues: Ribosomal RNA small subunit methyltransferase J (257 aa).

S-adenosyl-L-methionine-binding positions include 107–108 (RD), 123–124 (ER), and Asp177.

The protein belongs to the methyltransferase superfamily. RsmJ family.

It localises to the cytoplasm. The catalysed reaction is guanosine(1516) in 16S rRNA + S-adenosyl-L-methionine = N(2)-methylguanosine(1516) in 16S rRNA + S-adenosyl-L-homocysteine + H(+). Functionally, specifically methylates the guanosine in position 1516 of 16S rRNA. The chain is Ribosomal RNA small subunit methyltransferase J from Haemophilus influenzae (strain PittEE).